We begin with the raw amino-acid sequence, 313 residues long: DDRGK domain-containing protein 1 (313 aa).

The chain crosses the membrane as a helical span at residues 1-28 (MVSPVVYLVVAALLVGLILFLTRGRGRA). The tract at residues 1–113 (MVSPVVYLVV…IEKPVETHLS (113 aa)) is mediates interaction with CDK5RAP3. The Cytoplasmic portion of the chain corresponds to 29–313 (AAAAQEPLHN…GRETPAQAPA (285 aa)). Residues 40-88 (EVPAAAGRVARPQPLEPEEQRAAGRPRRRRDLGSRLQAQRRAQRVAWAD) form a disordered region. Phosphoserine is present on residues S73 and S113. Residues 73–87 (SRLQAQRRAQRVAWA) are compositionally biased toward low complexity. Positions 117–215 (GAKKLRKLEE…MTEEQSHSFL (99 aa)) are mediates interaction with TRIP4. The tract at residues 130 to 185 (RKAQREAEEAEREERKRLESQREAEWKKEEERLRLEEEQKEEEERKAQEEQAQREH) is disordered. A UFM1-interacting motif (UFIM) motif is present at residues 194–208 (TFVVVEEGVGETMTE). A mediates interaction with UFL1 region spans residues 215-313 (LAEFINYIKQ…GRETPAQAPA (99 aa)). The region spanning 228-272 (VLLEDLASQVGLRTQDTINRIQDLLAEGTLTGVIDDRGKFIYITP) is the PCI domain. A Glycyl lysine isopeptide (Lys-Gly) (interchain with G-Cter in UFM1) cross-link involves residue K266.

Belongs to the DDRGK1 family. Component of the UFM1 ribosome E3 ligase (UREL) complex, composed of UFL1, DDRGK1 and CDK5RAP3. Interacts with (unphosphorylated) ERN1/IRE1-alpha; interaction is dependent on UFM1 and takes place in response to endoplasmic reticulum stress, regulating ERN1/IRE1-alpha stability. Interacts with NFKBIA. Interacts with SOX9. Ubiquitinated. Ubiquitination probably triggers proteasomal degradation and is negatively regulated by UFL1, the enzyme involved in the ufmylation of DDRGK1. In terms of processing, ufmylated; conjugated to ubiquitin-like protein UFM1, probably at Lys-266 by UFL1. The relevance of ufmylation is however unclear: as DDRGK1 acts as a substrate adapter for ufmylation, it is uncertain whether ufmylation is a collateral effect of the ufmylation process or whether it is required to regulate its activity.

The protein resides in the endoplasmic reticulum membrane. In terms of biological role, component of the UFM1 ribosome E3 ligase (UREL) complex, a multiprotein complex that catalyzes ufmylation of endoplasmic reticulum-docked proteins. The UREL complex plays a key role in ribosome recycling by mediating mono-ufmylation of the RPL26/uL24 subunit of the 60S ribosome following ribosome dissociation: ufmylation weakens the junction between post-termination 60S subunits and SEC61 translocons, promoting release and recycling of the large ribosomal subunit from the endoplasmic reticulum membrane. Ufmylation of RPL26/uL24 and subsequent 60S ribosome recycling either take place after normal termination of translation or after ribosome stalling during cotranslational translocation at the endoplasmic reticulum. Within the UREL complex, DDRGK1 tethers the complex to the endoplasmic reticulum membrane to restrict its activity to endoplasmic reticulum-docked ribosomes and acts as an ufmylation 'reader': following RPL26/uL24 ufmylation, DDRGK1 specifically binds to ufmylated RPL26/uL24 via its UFIM motif, resulting in stable association between the 60S ribosome and the UREL complex, followed by dissociation of the 60S ribosome subunit from the endoplasmic reticulum membrane. The UREL complex is also involved in reticulophagy in response to endoplasmic reticulum stress by promoting ufmylation of proteins such as CYB5R3 and RPN1, thereby promoting lysosomal degradation of ufmylated proteins. Ufmylation-dependent reticulophagy inhibits the unfolded protein response (UPR) by regulating ERN1/IRE1-alpha stability. Acts as a regulator of immunity by promoting differentiation of B-cells into plasma cells: acts by promoting expansion of the endoplasmic reticulum and regulating the unfolded protein response (UPR). May also be required for TRIP4 ufmylation. May play a role in NF-kappa-B-mediated transcription through regulation of the phosphorylation and the degradation of NFKBIA, the inhibitor of NF-kappa-B. Plays a role in cartilage development through SOX9, inhibiting the ubiquitin-mediated proteasomal degradation of this transcriptional regulator. Required for stabilization and ufmylation of ATG9A. This chain is DDRGK domain-containing protein 1, found in Bos taurus (Bovine).